A 172-amino-acid chain; its full sequence is Ribosome maturation factor RimM (172 aa).

A PRC barrel domain is found at Glu-94–Leu-167.

The protein belongs to the RimM family. Binds ribosomal protein uS19.

Its subcellular location is the cytoplasm. Its function is as follows. An accessory protein needed during the final step in the assembly of 30S ribosomal subunit, possibly for assembly of the head region. Essential for efficient processing of 16S rRNA. May be needed both before and after RbfA during the maturation of 16S rRNA. It has affinity for free ribosomal 30S subunits but not for 70S ribosomes. This is Ribosome maturation factor RimM from Lacticaseibacillus paracasei (strain ATCC 334 / BCRC 17002 / CCUG 31169 / CIP 107868 / KCTC 3260 / NRRL B-441) (Lactobacillus paracasei).